The sequence spans 223 residues: Protein Wnt-1 (223 aa).

3 disulfides stabilise this stretch: C7-C24, C72-C86, and C74-C81. Residue S78 is the site of O-palmitoleoyl serine; by PORCN attachment. Residues 110–135 (VTMRNDGSPSDRETESSFVPYNPSHK) are disordered. Polar residues predominate over residues 125 to 135 (SSFVPYNPSHK). Cystine bridges form between C152/C183, C168/C178, C182/C222, C198/C213, C200/C210, and C205/C206. N169 is a glycosylation site (N-linked (GlcNAc...) asparagine).

The protein belongs to the Wnt family. Palmitoleoylation is required for efficient binding to frizzled receptors. Palmitoleoylation is necessary for proper trafficking to cell surface. Depalmitoleoylated by NOTUM, leading to inhibit Wnt signaling pathway.

It is found in the secreted. The protein resides in the extracellular space. The protein localises to the extracellular matrix. Ligand for members of the frizzled family of seven transmembrane receptors. Probable developmental protein. In Strongylocentrotus purpuratus (Purple sea urchin), this protein is Protein Wnt-1 (WNT-1).